The chain runs to 90 residues: DNA-binding protein HU (90 aa).

Belongs to the bacterial histone-like protein family. In terms of assembly, homodimer.

Histone-like DNA-binding protein which is capable of wrapping DNA to stabilize it, and thus to prevent its denaturation under extreme environmental conditions. The polypeptide is DNA-binding protein HU (hup) (Staphylococcus aureus (strain COL)).